The chain runs to 217 residues: Protein canopy 4 (217 aa).

Positions 1–27 (MEMFTVFLFYMFSLVLANQEERLPNKC) are cleaved as a signal peptide. 3 disulfides stabilise this stretch: C27/C185, C30/C173, and C83/C145. The disordered stretch occupies residues 194 to 217 (MGMKGSEEESEGKDGKETHDAGEL). Residues 205 to 217 (GKDGKETHDAGEL) are compositionally biased toward basic and acidic residues.

The protein belongs to the canopy family.

Its subcellular location is the secreted. This Danio rerio (Zebrafish) protein is Protein canopy 4 (cnpy4).